Consider the following 1065-residue polypeptide: WD repeat-containing protein on Y chromosome (1065 aa).

WD repeat units follow at residues 153–197 (EEVT…IRTA), 326–365 (RVPL…EPSA), 369–408 (GHNG…LLQT), 459–498 (THAA…RKII), 511–550 (IIDI…VVRN), 598–638 (FHTD…RRYS), 745–784 (KTGD…VPEA), and 828–867 (AHLK…LGTL). A compositionally biased stretch (basic and acidic residues) spans 915–925 (PAKRAEVKAPE). Disordered stretches follow at residues 915 to 936 (PAKR…QTDD) and 1024 to 1065 (GSAL…QQSE). Over residues 926 to 936 (DRDEETAQTDD) the composition is skewed to acidic residues.

This chain is WD repeat-containing protein on Y chromosome, found in Drosophila persimilis (Fruit fly).